The sequence spans 165 residues: MSCDGGKPAPAKLGDEQLAELREIFRSFDQNKDGSLTELELGSLLRSLGLKPSQDQLDTLIQKADRNNNGLVEFSEFVALVEPDLVKCPYTDDQLKAIFRMFDRDGNGYITAAELAHSMAKLGHALTAEELTGMIKEADRDGDGCIDFQEFVQAITSAAFDNAWG.

4 EF-hand domains span residues Glu16–Lys51, Pro52–Lys87, Tyr90–Ala125, and Leu126–Asp161. Positions 29, 31, 33, 35, 40, 65, 67, 69, 76, 103, 105, 107, 109, 114, 139, 141, 143, 145, and 150 each coordinate Ca(2+).

As to quaternary structure, calcium and pH-dependent interaction with NHX1 (increases when pH decreases, better at pH 5.5 than at pH 7.5). Also interacts with the CPB protein At2g18750.

The protein resides in the vacuole. Its function is as follows. Potential calcium sensor that modulates ion selectivity of NHX1. The polypeptide is Probable calcium-binding protein CML18 (CML18) (Arabidopsis thaliana (Mouse-ear cress)).